We begin with the raw amino-acid sequence, 462 residues long: L-seryl-tRNA(Sec) selenium transferase (462 aa).

An N6-(pyridoxal phosphate)lysine modification is found at Lys293.

It belongs to the SelA family. Pyridoxal 5'-phosphate serves as cofactor.

The protein resides in the cytoplasm. The enzyme catalyses L-seryl-tRNA(Sec) + selenophosphate + H(+) = L-selenocysteinyl-tRNA(Sec) + phosphate. It functions in the pathway aminoacyl-tRNA biosynthesis; selenocysteinyl-tRNA(Sec) biosynthesis; selenocysteinyl-tRNA(Sec) from L-seryl-tRNA(Sec) (bacterial route): step 1/1. Functionally, converts seryl-tRNA(Sec) to selenocysteinyl-tRNA(Sec) required for selenoprotein biosynthesis. In Clostridium botulinum (strain Okra / Type B1), this protein is L-seryl-tRNA(Sec) selenium transferase.